A 488-amino-acid polypeptide reads, in one-letter code: ATP-dependent RNA helicase dbp3 (488 aa).

Residues 1–29 (MAKREHQDQTGDSRPSKKSKGTKDTKKNT) are compositionally biased toward basic and acidic residues. The segment at 1 to 42 (MAKREHQDQTGDSRPSKKSKGTKDTKKNTEVSPPYFQSPALD) is disordered. Residues 92–100 (GFASPTAIQ) carry the Q motif motif. Residues 104-279 (WPLLFAGRDV…STFMTSPVTV (176 aa)) form the Helicase ATP-binding domain. 117–124 (AETGSGKT) contacts ATP. A DEAD box motif is present at residues 226 to 229 (DEAD). Residues 306–457 (EKEQRLVQIL…EVPEALLKFG (152 aa)) form the Helicase C-terminal domain.

Belongs to the DEAD box helicase family. DDX5/DBP2 subfamily.

Its subcellular location is the nucleus. It localises to the nucleolus. It carries out the reaction ATP + H2O = ADP + phosphate + H(+). Functionally, ATP-dependent RNA helicase required for 60S ribosomal subunit synthesis. Involved in efficient pre-rRNA processing, predominantly at site A3, which is necessary for the normal formation of 25S and 5.8S rRNAs. The sequence is that of ATP-dependent RNA helicase dbp3 (dbp3) from Emericella nidulans (strain FGSC A4 / ATCC 38163 / CBS 112.46 / NRRL 194 / M139) (Aspergillus nidulans).